A 225-amino-acid polypeptide reads, in one-letter code: uncharacterized protein (225 aa).

6 consecutive transmembrane segments (helical) span residues 25–45 (MMLA…IPFL), 57–77 (VFLI…ITVA), 83–103 (FIWD…NFAI), 109–129 (LYFH…SLAT), 135–155 (LLTT…FGYV), and 187–207 (IFAL…LIGV).

The protein localises to the cell membrane. This is an uncharacterized protein from Mycoplasma pneumoniae (strain ATCC 29342 / M129 / Subtype 1) (Mycoplasmoides pneumoniae).